The sequence spans 282 residues: NADPH-dependent 7-cyano-7-deazaguanine reductase (282 aa).

88 to 90 (IES) contributes to the substrate binding site. 90–91 (SK) lines the NADPH pocket. Residue cysteine 190 is the Thioimide intermediate of the active site. Aspartate 197 (proton donor) is an active-site residue. 229–230 (HE) contacts substrate. Residue 258 to 259 (RG) coordinates NADPH.

It belongs to the GTP cyclohydrolase I family. QueF type 2 subfamily. As to quaternary structure, homodimer.

Its subcellular location is the cytoplasm. The enzyme catalyses 7-aminomethyl-7-carbaguanine + 2 NADP(+) = 7-cyano-7-deazaguanine + 2 NADPH + 3 H(+). The protein operates within tRNA modification; tRNA-queuosine biosynthesis. Its function is as follows. Catalyzes the NADPH-dependent reduction of 7-cyano-7-deazaguanine (preQ0) to 7-aminomethyl-7-deazaguanine (preQ1). The polypeptide is NADPH-dependent 7-cyano-7-deazaguanine reductase (Salmonella paratyphi B (strain ATCC BAA-1250 / SPB7)).